Here is a 214-residue protein sequence, read N- to C-terminus: Pyridoxine/pyridoxamine 5'-phosphate oxidase (214 aa).

Substrate is bound by residues 8–11 and Lys66; that span reads RTNY. FMN is bound by residues 61–66, 76–77, Arg82, Lys83, and Gln105; these read RIVLIK and FT. Residues Tyr123, Arg127, and Ser131 each contribute to the substrate site. FMN-binding positions include 140–141 and Trp184; that span reads QS. Residue 190–192 participates in substrate binding; it reads RLH. FMN is bound at residue Arg194.

Belongs to the pyridoxamine 5'-phosphate oxidase family. As to quaternary structure, homodimer. The cofactor is FMN.

The enzyme catalyses pyridoxamine 5'-phosphate + O2 + H2O = pyridoxal 5'-phosphate + H2O2 + NH4(+). It catalyses the reaction pyridoxine 5'-phosphate + O2 = pyridoxal 5'-phosphate + H2O2. The protein operates within cofactor metabolism; pyridoxal 5'-phosphate salvage; pyridoxal 5'-phosphate from pyridoxamine 5'-phosphate: step 1/1. It participates in cofactor metabolism; pyridoxal 5'-phosphate salvage; pyridoxal 5'-phosphate from pyridoxine 5'-phosphate: step 1/1. Functionally, catalyzes the oxidation of either pyridoxine 5'-phosphate (PNP) or pyridoxamine 5'-phosphate (PMP) into pyridoxal 5'-phosphate (PLP). This Burkholderia thailandensis (strain ATCC 700388 / DSM 13276 / CCUG 48851 / CIP 106301 / E264) protein is Pyridoxine/pyridoxamine 5'-phosphate oxidase.